The chain runs to 1007 residues: Kinesin-like protein KIN-7D, chloroplastic (1007 aa).

Residues 1-53 (MATRPASRQRRASSAAAAVAVVRSSPQPQQQQQQQLPIPQSGSPTSTTTTTTS) constitute a chloroplast transit peptide. Residues 1-55 (MATRPASRQRRASSAAAAVAVVRSSPQPQQQQQQQLPIPQSGSPTSTTTTTTSSS) show a composition bias toward low complexity. Residues 1-79 (MATRPASRQR…LFAGLDEDPA (79 aa)) form a disordered region. The 320-residue stretch at 83-402 (NVTVTVRFRP…LKFAHRAKRI (320 aa)) folds into the Kinesin motor domain. 163–170 (GVTSSGKT) contributes to the ATP binding site. Positions 403 to 495 (EVQASQNKII…QRLTKLILVS (93 aa)) form a coiled coil. The segment at 579-607 (ILTSSEGDKSSLTKSTAPSTPIGESVNFP) is disordered. Coiled coils occupy residues 687–716 (NNEK…ERQI), 754–791 (AADN…TLQA), and 836–907 (SVEI…SVRS). Positions 901–941 (ELASVRSPTPRRANSGLRGTRRDSISRRHEPAPRRDNNAGY) are disordered. Basic and acidic residues predominate over residues 920-941 (TRRDSISRRHEPAPRRDNNAGY). Positions 942–982 (EREKALEAVLMEKEQKEAELQRRIEESKQKEAFLESELANM) form a coiled coil.

This sequence belongs to the TRAFAC class myosin-kinesin ATPase superfamily. Kinesin family. KIN-7 subfamily. In terms of assembly, binds microtubules. Homodimer. Mg(2+) is required as a cofactor.

The protein resides in the plastid. Its subcellular location is the chloroplast. In terms of biological role, probable minus end-directed motor protein with a microtubule-enhanced ATPase activity. Binds ATP/ADP in vitro. Retains total enzymatic activity even after the removal of the ADP bound in the active site. The chain is Kinesin-like protein KIN-7D, chloroplastic from Oryza sativa subsp. japonica (Rice).